Consider the following 190-residue polypeptide: Lipocalin Can f 6.0101 (190 aa).

An N-terminal signal peptide occupies residues 1 to 15 (MKLLLLCLGLILVHA). Residues 43–54 (SDIKEKIEENGS) form an igE-binding region. Residues Asn-52 and Asn-67 are each glycosylated (N-linked (GlcNAc...) asparagine). The segment at 76–83 (TKVNGKCT) is igE-binding. Cys-82 and Cys-175 are disulfide-bonded. A glycan (N-linked (GlcNAc...) asparagine) is linked at Asn-90. The segment at 91–97 (KTEKDGE) is igE-binding. The tract at residues 100-109 (VVHDGYNLFR) is no IgE-binding. 2 igE-binding regions span residues 125-132 (NVNQEQEF) and 139-152 (GRKP…KEKF).

It belongs to the calycin superfamily. Lipocalin family. As to quaternary structure, monomer. Expressed in saliva (at protein level). Expressed in dander (at protein level). According to PubMed:22104604, expressed in submaxillary gland. In contrast, according to PubMed:22515174, not expressed in submaxillary gland. Expressed in bladder and skin, but not in tongue.

It is found in the secreted. In Canis lupus familiaris (Dog), this protein is Lipocalin Can f 6.0101.